Reading from the N-terminus, the 217-residue chain is Octanoyltransferase (217 aa).

The region spanning 32 to 207 (DDSADEIWLV…HMIKKLNATQ (176 aa)) is the BPL/LPL catalytic domain. Substrate contacts are provided by residues 71–78 (RGGQVTYH), 138–140 (SLG), and 151–153 (GLA). The active-site Acyl-thioester intermediate is the Cys169.

The protein belongs to the LipB family.

The protein resides in the cytoplasm. It catalyses the reaction octanoyl-[ACP] + L-lysyl-[protein] = N(6)-octanoyl-L-lysyl-[protein] + holo-[ACP] + H(+). It participates in protein modification; protein lipoylation via endogenous pathway; protein N(6)-(lipoyl)lysine from octanoyl-[acyl-carrier-protein]: step 1/2. Its function is as follows. Catalyzes the transfer of endogenously produced octanoic acid from octanoyl-acyl-carrier-protein onto the lipoyl domains of lipoate-dependent enzymes. Lipoyl-ACP can also act as a substrate although octanoyl-ACP is likely to be the physiological substrate. This Pseudoalteromonas translucida (strain TAC 125) protein is Octanoyltransferase.